A 360-amino-acid polypeptide reads, in one-letter code: Peptide chain release factor 1 (360 aa).

Gln235 carries the N5-methylglutamine modification. Positions 284–313 are disordered; that stretch reads AKRQQAEASTRRNLLGSGDRSDRNRTYNFP.

Belongs to the prokaryotic/mitochondrial release factor family. Post-translationally, methylated by PrmC. Methylation increases the termination efficiency of RF1.

The protein localises to the cytoplasm. Functionally, peptide chain release factor 1 directs the termination of translation in response to the peptide chain termination codons UAG and UAA. In Salmonella gallinarum (strain 287/91 / NCTC 13346), this protein is Peptide chain release factor 1.